The primary structure comprises 140 residues: ATP synthase epsilon chain (140 aa).

This sequence belongs to the ATPase epsilon chain family. In terms of assembly, F-type ATPases have 2 components, CF(1) - the catalytic core - and CF(0) - the membrane proton channel. CF(1) has five subunits: alpha(3), beta(3), gamma(1), delta(1), epsilon(1). CF(0) has three main subunits: a, b and c.

It is found in the cell inner membrane. In terms of biological role, produces ATP from ADP in the presence of a proton gradient across the membrane. The protein is ATP synthase epsilon chain of Nitrosomonas europaea (strain ATCC 19718 / CIP 103999 / KCTC 2705 / NBRC 14298).